The sequence spans 315 residues: KH domain-containing protein At5g56140 (315 aa).

Disordered regions lie at residues 1-53 and 136-158; these read MMMM…GGLR and SQFP…SPGS. Residues 7–28 show a composition bias toward gly residues; it reads LGGGGGGGGGSGGGIGGGGGGR. 2 stretches are compositionally biased toward polar residues: residues 31–53 and 136–146; these read TYSS…GGLR and SQFPSERSVPS. The 68-residue stretch at 171–238 folds into the KH domain; the sequence is DIPVDNYPNF…EHLNEPLHIL (68 aa). Residues 289–315 form a disordered region; the sequence is REEGSPMSGSVSPYNSLGMKRAKTREG. Ser300 is subject to Phosphoserine.

It localises to the nucleus. The protein is KH domain-containing protein At5g56140 of Arabidopsis thaliana (Mouse-ear cress).